Consider the following 435-residue polypeptide: 5-methylthioadenosine/S-adenosylhomocysteine deaminase (435 aa).

Zn(2+) contacts are provided by H65 and H67. Substrate contacts are provided by E94, R150, and H189. Residue H216 coordinates Zn(2+). Residues E219 and D304 each contribute to the substrate site. D304 provides a ligand contact to Zn(2+).

Belongs to the metallo-dependent hydrolases superfamily. MTA/SAH deaminase family. Requires Zn(2+) as cofactor.

It catalyses the reaction S-adenosyl-L-homocysteine + H2O + H(+) = S-inosyl-L-homocysteine + NH4(+). The enzyme catalyses S-methyl-5'-thioadenosine + H2O + H(+) = S-methyl-5'-thioinosine + NH4(+). Its function is as follows. Catalyzes the deamination of 5-methylthioadenosine and S-adenosyl-L-homocysteine into 5-methylthioinosine and S-inosyl-L-homocysteine, respectively. Is also able to deaminate adenosine. This Bacillus cereus (strain ATCC 14579 / DSM 31 / CCUG 7414 / JCM 2152 / NBRC 15305 / NCIMB 9373 / NCTC 2599 / NRRL B-3711) protein is 5-methylthioadenosine/S-adenosylhomocysteine deaminase.